A 1257-amino-acid chain; its full sequence is LIM domain kinase 1 (1257 aa).

The tract at residues 1–24 (MHHQQRLRANGGRGGTGLGAGSGP) is disordered. The interval 1–147 (MHHQQRLRAN…ERSKLYCGQC (147 aa)) is interaction with LATS1. Over residues 11-24 (GGRGGTGLGAGSGP) the composition is skewed to gly residues. LIM zinc-binding domains are found at residues 31–93 (PLCA…RFGD) and 94–154 (ACQQ…RSCQ). The PDZ domain occupies 174–274 (LVEIPKDATP…MLQLTVEHDP (101 aa)). The region spanning 401 to 686 (LVIGEKLGEG…PCFETLHVWL (286 aa)) is the Protein kinase domain. ATP contacts are provided by residues 407–415 (LGEGFFGKV) and lysine 430. Aspartate 522 is a catalytic residue. 3 disordered regions span residues 552-587 (LPSGNMTPGGYGSGANSDAPMSPSGTLRRSKSRQRR), 759-811 (QDIP…ERAL), and 881-900 (EELLEESTNKPSNQESQHHR). The span at 794 to 811 (QEERRNLTPDTESKERAL) shows a compositional bias: basic and acidic residues. Position 1000 is a phosphoserine (serine 1000). Disordered regions lie at residues 1010–1037 (AKQLATPAPKRSKATATTKGGQSSNPPL), 1085–1182 (SAQQ…EKVH), and 1212–1257 (AAGT…NTRC). Polar residues-rich tracts occupy residues 1085 to 1095 (SAQQQRTSSNH) and 1113 to 1125 (RTGSQGIPASNCV). 2 stretches are compositionally biased toward low complexity: residues 1126 to 1137 (SPTRSSRPGSPT) and 1145 to 1166 (TAATAQRLTNAAATHQQQHQQQ).

The protein belongs to the protein kinase superfamily. TKL Ser/Thr protein kinase family. As to quaternary structure, interacts with LATS1, and this interaction inhibits phosphorylation of tsr/cofilin. Post-translationally, phosphorylated on serine and/or threonine residues by ROCK1. Phosphorylated by PAK4 resulting in increased LIMK1 ability to phosphorylate cofilin. May be dephosphorylated and inactivated by SSH1. As to expression, expressed throughout the imaginal disks of the eye, leg and wing.

Its subcellular location is the cytoplasm. The protein resides in the cleavage furrow. It is found in the midbody. The enzyme catalyses L-seryl-[protein] + ATP = O-phospho-L-seryl-[protein] + ADP + H(+). It carries out the reaction L-threonyl-[protein] + ATP = O-phospho-L-threonyl-[protein] + ADP + H(+). Protein kinase which regulates actin filament dynamics. Phosphorylates and inactivates the actin binding/depolymerizing factor tsr/cofilin, thereby stabilizing the actin cytoskeleton. Modulation of actin cytoskeleton dynamics may be essential for imaginal disk morphogenesis and axon guidance. This Drosophila melanogaster (Fruit fly) protein is LIM domain kinase 1 (LIMK1).